The chain runs to 123 residues: Venom peptide MmKTx1 (123 aa).

The N-terminal stretch at 1-21 (MSIKISAIALFMLSFTVFVNG) is a signal peptide.

This sequence belongs to the scorpion La1-like peptide family. In terms of processing, contains 4 disulfide bonds. As to expression, expressed by the venom gland.

The protein resides in the secreted. This chain is Venom peptide MmKTx1, found in Olivierus martensii (Manchurian scorpion).